The following is a 464-amino-acid chain: Soluble pyridine nucleotide transhydrogenase (464 aa).

35–44 contacts FAD; sequence DDRRQVGGNC.

This sequence belongs to the class-I pyridine nucleotide-disulfide oxidoreductase family. FAD serves as cofactor.

Its subcellular location is the cytoplasm. It catalyses the reaction NAD(+) + NADPH = NADH + NADP(+). In terms of biological role, conversion of NADPH, generated by peripheral catabolic pathways, to NADH, which can enter the respiratory chain for energy generation. This is Soluble pyridine nucleotide transhydrogenase from Pseudomonas putida (strain ATCC 47054 / DSM 6125 / CFBP 8728 / NCIMB 11950 / KT2440).